The following is a 120-amino-acid chain: Small ribosomal subunit protein uS13 (120 aa).

The interval 96-120 (PCRGQRTRTNARTRKGPRKAIAGKK) is disordered.

This sequence belongs to the universal ribosomal protein uS13 family. As to quaternary structure, part of the 30S ribosomal subunit. Forms a loose heterodimer with protein S19. Forms two bridges to the 50S subunit in the 70S ribosome.

Functionally, located at the top of the head of the 30S subunit, it contacts several helices of the 16S rRNA. In the 70S ribosome it contacts the 23S rRNA (bridge B1a) and protein L5 of the 50S subunit (bridge B1b), connecting the 2 subunits; these bridges are implicated in subunit movement. Contacts the tRNAs in the A and P-sites. The protein is Small ribosomal subunit protein uS13 of Dechloromonas aromatica (strain RCB).